The sequence spans 359 residues: 3-dehydroquinate synthase (359 aa).

NAD(+) contacts are provided by residues Gly106–Asp110, Thr130–Ser131, Lys143, and Lys152. The Zn(2+) site is built by Glu185, His246, and His262.

This sequence belongs to the sugar phosphate cyclases superfamily. Dehydroquinate synthase family. NAD(+) is required as a cofactor. The cofactor is Co(2+). It depends on Zn(2+) as a cofactor.

It localises to the cytoplasm. The enzyme catalyses 7-phospho-2-dehydro-3-deoxy-D-arabino-heptonate = 3-dehydroquinate + phosphate. The protein operates within metabolic intermediate biosynthesis; chorismate biosynthesis; chorismate from D-erythrose 4-phosphate and phosphoenolpyruvate: step 2/7. Catalyzes the conversion of 3-deoxy-D-arabino-heptulosonate 7-phosphate (DAHP) to dehydroquinate (DHQ). In Lactiplantibacillus plantarum (strain ATCC BAA-793 / NCIMB 8826 / WCFS1) (Lactobacillus plantarum), this protein is 3-dehydroquinate synthase.